Consider the following 389-residue polypeptide: Elongation factor Tu-3 (389 aa).

Positions Lys10–Glu203 constitute a tr-type G domain. The segment at Gly19 to Thr26 is G1. Gly19–Thr26 contacts GTP. Thr26 contributes to the Mg(2+) binding site. A G2 region spans residues Gly60–Asn64. Residues Asp81 to Gly84 form a G3 region. GTP-binding positions include Asp81–His85 and Asn136–Asp139. Residues Asn136 to Asp139 form a G4 region. A G5 region spans residues Ser173–Leu175.

Belongs to the TRAFAC class translation factor GTPase superfamily. Classic translation factor GTPase family. EF-Tu/EF-1A subfamily. As to quaternary structure, monomer.

It is found in the cytoplasm. It carries out the reaction GTP + H2O = GDP + phosphate + H(+). Functionally, GTP hydrolase that promotes the GTP-dependent binding of aminoacyl-tRNA to the A-site of ribosomes during protein biosynthesis. The chain is Elongation factor Tu-3 from Streptomyces ramocissimus.